Here is a 222-residue protein sequence, read N- to C-terminus: Pro-opiomelanocortin (222 aa).

The signal sequence occupies residues 1–18 (MCPVWLLVAVVVVGGSRG). Residues 19–90 (AVSQCWEHPS…SSSSSSSPQS (72 aa)) constitute a propeptide that is removed on maturation. 2 disordered regions span residues 56–98 (IPGN…SMEH) and 148–170 (EEEK…LQEK). Residues 70-93 (PSSSSSFILPSSSSSSSSPQSKRS) show a composition bias toward low complexity. The segment covering 148–162 (EEEKAQEVMAEEEEE) has biased composition (acidic residues).

This sequence belongs to the POMC family. Specific enzymatic cleavages at paired basic residues yield the different active peptides.

It is found in the secreted. Stimulates the adrenal glands to release cortisol. Functionally, anorexigenic peptide. Increases the pigmentation of skin by increasing melanin production in melanocytes. In terms of biological role, increases the pigmentation of skin by increasing melanin production in melanocytes. Its function is as follows. Endogenous orexigenic opiate. Endogenous opiate. This is Pro-opiomelanocortin (pomc) from Thunnus obesus (Bigeye tuna).